Here is a 343-residue protein sequence, read N- to C-terminus: Cytoplasmic tRNA 2-thiolation protein 1 (343 aa).

The protein belongs to the TtcA family. CTU1/NCS6/ATPBD3 subfamily.

It localises to the cytoplasm. Its pathway is tRNA modification; 5-methoxycarbonylmethyl-2-thiouridine-tRNA biosynthesis. Its function is as follows. Plays a central role in 2-thiolation of mcm(5)S(2)U at tRNA wobble positions of tRNA(Lys), tRNA(Glu) and tRNA(Gln). Directly binds tRNAs and probably acts by catalyzing adenylation of tRNAs, an intermediate required for 2-thiolation. It is unclear whether it acts as a sulfurtransferase that transfers sulfur from thiocarboxylated URM1 onto the uridine of tRNAs at wobble position. The polypeptide is Cytoplasmic tRNA 2-thiolation protein 1 (Drosophila yakuba (Fruit fly)).